Reading from the N-terminus, the 111-residue chain is Small ribosomal subunit protein uS17 (111 aa).

This sequence belongs to the universal ribosomal protein uS17 family. In terms of assembly, part of the 30S ribosomal subunit.

In terms of biological role, one of the primary rRNA binding proteins, it binds specifically to the 5'-end of 16S ribosomal RNA. This chain is Small ribosomal subunit protein uS17, found in Methanocella arvoryzae (strain DSM 22066 / NBRC 105507 / MRE50).